A 276-amino-acid polypeptide reads, in one-letter code: Omega-amidase NIT2-A (276 aa).

A CN hydrolase domain is found at Phe4 to Leu248. Glu43 acts as the Proton acceptor in catalysis. Lys112 acts as the Proton donor in catalysis. Residue Cys153 is the Nucleophile of the active site.

It belongs to the carbon-nitrogen hydrolase superfamily. NIT1/NIT2 family. As to quaternary structure, homodimer.

It localises to the cytoplasm. It carries out the reaction 2-oxoglutaramate + H2O = 2-oxoglutarate + NH4(+). The enzyme catalyses 2-oxosuccinamate + H2O = oxaloacetate + NH4(+). In terms of biological role, has omega-amidase activity. The role of omega-amidase is to remove potentially toxic intermediates by converting 2-oxoglutaramate and 2-oxosuccinamate to biologically useful 2-oxoglutarate and oxaloacetate, respectively. This is Omega-amidase NIT2-A (nit2a) from Xenopus laevis (African clawed frog).